Here is a 243-residue protein sequence, read N- to C-terminus: Terpene cyclase dpasB (243 aa).

The next 7 helical transmembrane spans lie at 16-36, 50-70, 79-99, 112-132, 141-161, 172-189, and 207-227; these read VVWV…SNYI, MALM…FIYP, IHTL…RYGA, LPVI…AFAE, AVSG…QLLC, LWLA…PNML, and IWFL…LWYV.

Belongs to the paxB family.

It is found in the membrane. It participates in secondary metabolite biosynthesis; terpenoid biosynthesis. Its function is as follows. Terpene cyclase; part of the gene cluster that mediates the biosynthesis of the diterpenoid pyrones subglutinols A and B. The first step of the pathway is the synthesis of the alpha-pyrone moiety by the polyketide synthase dpasA via condensation of one acetyl-CoA starter unit with 3 malonyl-CoA units and 2 methylations. The alpha-pyrone is then combined with geranylgeranyl pyrophosphate (GGPP) formed by the GGPP synthase dpasD through the action of the prenyltransferase dpasC to yield a linear alpha-pyrone diterpenoid. Subsequent steps in the diterpenoid pyrone biosynthetic pathway involve the decalin core formation, which is initiated by the epoxidation of the C10-C11 olefin by the FAD-dependent oxidoreductase dpasE, and is followed by a cyclization cascade catalyzed by the terpene cyclase dpasB. The FAD-linked oxidoreductase dpasF is then involved in tetrahydrofuran (THF) ring formation at the C5 unit to complete the formation of subglutinols A and B. DpasF possesses also an additional catalytic ability of multi-step oxidations to generate a new DDP analog with an enone system at the C5 named FDDP A. The chain is Terpene cyclase dpasB from Apiospora sacchari (Arthrinium sacchari).